A 279-amino-acid chain; its full sequence is 4-diphosphocytidyl-2-C-methyl-D-erythritol kinase (279 aa).

The active site involves K9. 93 to 103 (PMGAGLGGGSS) contacts ATP. Residue D135 is part of the active site.

It belongs to the GHMP kinase family. IspE subfamily.

It catalyses the reaction 4-CDP-2-C-methyl-D-erythritol + ATP = 4-CDP-2-C-methyl-D-erythritol 2-phosphate + ADP + H(+). The protein operates within isoprenoid biosynthesis; isopentenyl diphosphate biosynthesis via DXP pathway; isopentenyl diphosphate from 1-deoxy-D-xylulose 5-phosphate: step 3/6. Its function is as follows. Catalyzes the phosphorylation of the position 2 hydroxy group of 4-diphosphocytidyl-2C-methyl-D-erythritol. The chain is 4-diphosphocytidyl-2-C-methyl-D-erythritol kinase from Acinetobacter baylyi (strain ATCC 33305 / BD413 / ADP1).